A 141-amino-acid polypeptide reads, in one-letter code: Putative pre-16S rRNA nuclease (141 aa).

This sequence belongs to the YqgF nuclease family.

The protein localises to the cytoplasm. In terms of biological role, could be a nuclease involved in processing of the 5'-end of pre-16S rRNA. The chain is Putative pre-16S rRNA nuclease from Acetivibrio thermocellus (strain ATCC 27405 / DSM 1237 / JCM 9322 / NBRC 103400 / NCIMB 10682 / NRRL B-4536 / VPI 7372) (Clostridium thermocellum).